The chain runs to 234 residues: N-acetyl-alpha-D-glucosaminyl L-malate deacetylase 1 (234 aa).

Positions 12, 15, and 113 each coordinate Zn(2+).

The protein belongs to the PIGL family. Homohexamer. Trimer of dimers. Zn(2+) serves as cofactor.

It catalyses the reaction (S)-malyl N-acetyl-alpha-D-glucosaminide + H2O = (S)-malyl alpha-D-glucosaminide + acetate. Involved in bacillithiol (BSH) biosynthesis. Catalyzes the second step of the pathway, the deacetylation of N-acetylglucosaminylmalate (GlcNAc-Mal) to glucosamine malate (GlcN-Mal). The chain is N-acetyl-alpha-D-glucosaminyl L-malate deacetylase 1 from Bacillus cereus (strain ATCC 14579 / DSM 31 / CCUG 7414 / JCM 2152 / NBRC 15305 / NCIMB 9373 / NCTC 2599 / NRRL B-3711).